A 297-amino-acid chain; its full sequence is ATP synthase F(1) complex subunit gamma, mitochondrial (297 aa).

The transit peptide at 1–25 (MFSRAGVAGLSAWTLQPQWIQVRNM) directs the protein to the mitochondrion. N6-acetyllysine is present on K39. K49 is subject to N6-succinyllysine. Position 55 is an N6-acetyllysine (K55). K115 carries the N6-acetyllysine; alternate modification. K115 bears the N6-succinyllysine; alternate mark. Position 146 is a phosphoserine (S146). K154 bears the N6-acetyllysine; alternate mark. N6-succinyllysine; alternate is present on K154. K197 is modified (N6-acetyllysine). Residue K270 is modified to N6-succinyllysine.

This sequence belongs to the ATPase gamma chain family. Component of the ATP synthase complex composed at least of ATP5F1A/subunit alpha, ATP5F1B/subunit beta, ATP5MC1/subunit c (homooctomer), MT-ATP6/subunit a, MT-ATP8/subunit 8, ATP5ME/subunit e, ATP5MF/subunit f, ATP5MG/subunit g, ATP5MK/subunit k, ATP5MJ/subunit j, ATP5F1C/subunit gamma, ATP5F1D/subunit delta, ATP5F1E/subunit epsilon, ATP5PF/subunit F6, ATP5PB/subunit b, ATP5PD/subunit d, ATP5PO/subunit OSCP. ATP synthase complex consists of a soluble F(1) head domain (subunits alpha(3) and beta(3)) - the catalytic core - and a membrane F(0) domain - the membrane proton channel (subunits c, a, 8, e, f, g, k and j). These two domains are linked by a central stalk (subunits gamma, delta, and epsilon) rotating inside the F1 region and a stationary peripheral stalk (subunits F6, b, d, and OSCP). Interacts with FLVCR2; this interaction occurs in the absence of heme and is disrupted upon heme binding.

Its subcellular location is the mitochondrion inner membrane. In terms of biological role, subunit gamma, of the mitochondrial membrane ATP synthase complex (F(1)F(0) ATP synthase or Complex V) that produces ATP from ADP in the presence of a proton gradient across the membrane which is generated by electron transport complexes of the respiratory chain. ATP synthase complex consist of a soluble F(1) head domain - the catalytic core - and a membrane F(1) domain - the membrane proton channel. These two domains are linked by a central stalk rotating inside the F(1) region and a stationary peripheral stalk. During catalysis, ATP synthesis in the catalytic domain of F(1) is coupled via a rotary mechanism of the central stalk subunits to proton translocation. In vivo, can only synthesize ATP although its ATP hydrolase activity can be activated artificially in vitro. With the central stalk subunit delta, is essential for the biogenesis of F(1) catalytic part of the ATP synthase complex namely in the formation of F1 assembly intermediate. This chain is ATP synthase F(1) complex subunit gamma, mitochondrial, found in Pongo abelii (Sumatran orangutan).